A 67-amino-acid polypeptide reads, in one-letter code: Small ribosomal subunit protein eS17 (67 aa).

Belongs to the eukaryotic ribosomal protein eS17 family. In terms of assembly, part of the 30S ribosomal subunit.

The protein is Small ribosomal subunit protein eS17 of Thermococcus kodakarensis (strain ATCC BAA-918 / JCM 12380 / KOD1) (Pyrococcus kodakaraensis (strain KOD1)).